Here is a 348-residue protein sequence, read N- to C-terminus: Ferredoxin--NADP reductase 1 (348 aa).

The FAD site is built by Glu36, Lys44, Tyr48, Ile88, Pro123, Asp285, and Ser326. The interval 329 to 348 (EKFKKKNEQLKQEKQAQLMN) is disordered.

Belongs to the ferredoxin--NADP reductase type 2 family. As to quaternary structure, homodimer. Requires FAD as cofactor.

The enzyme catalyses 2 reduced [2Fe-2S]-[ferredoxin] + NADP(+) + H(+) = 2 oxidized [2Fe-2S]-[ferredoxin] + NADPH. The chain is Ferredoxin--NADP reductase 1 from Shouchella clausii (strain KSM-K16) (Alkalihalobacillus clausii).